A 1531-amino-acid polypeptide reads, in one-letter code: Lysophospholipase nte1 (1531 aa).

At 1 to 72 (MATGDGIIAA…TPPAPSTMVG (72 aa)) the chain is on the cytoplasmic side. Residues 73-93 (WIGWIFSFIFQVIPSVLYWIV) traverse the membrane as a helical segment. At 94 to 115 (TFTTITLPTWLFTLFSMSLTFT) the chain is on the lumenal side. A helical membrane pass occupies residues 116–136 (MNFTTLLLIALAVVSTISWFI). The Cytoplasmic portion of the chain corresponds to 137–1531 (RYRFLNMYSR…RTLAPRRASI (1395 aa)). Disordered stretches follow at residues 242-265 (GSDE…PDGR), 303-385 (ASSA…TRRK), and 766-789 (NTSS…KQSR). The span at 325–343 (REMDDSPHVYQGDRLDPAS) shows a compositional bias: basic and acidic residues. Residues 689-809 (GGTS…AVAS) and 849-969 (RLTS…IAQR) each bind a nucleoside 3',5'-cyclic phosphate. Residues 768-779 (SSSRVSGSAAAA) show a composition bias toward low complexity. Residues 1228 to 1392 (LVLGGGGARG…IDNLTVDHMK (165 aa)) form the PNPLA domain. Residues 1232–1237 (GGGARG) carry the GXGXXG motif. Positions 1259-1263 (GTSIG) match the GXSXG motif. Serine 1261 functions as the Nucleophile in the catalytic mechanism. Aspartate 1379 functions as the Proton acceptor in the catalytic mechanism. The short motif at 1379-1381 (DGG) is the DGA/G element. A disordered region spans residues 1510-1531 (LPEETEEKKKLQRTLAPRRASI).

Belongs to the NTE family.

It is found in the endoplasmic reticulum membrane. It catalyses the reaction a 1-acyl-sn-glycero-3-phosphocholine + H2O = sn-glycerol 3-phosphocholine + a fatty acid + H(+). Inhibited by organophosphorus esters. Intracellular phospholipase B that catalyzes the double deacylation of phosphatidylcholine (PC) to glycerophosphocholine (GroPCho). Plays an important role in membrane lipid homeostasis. Responsible for the rapid PC turnover in response to inositol, elevated temperatures, or when choline is present in the growth medium. This Aspergillus niger (strain ATCC MYA-4892 / CBS 513.88 / FGSC A1513) protein is Lysophospholipase nte1 (nte1).